The primary structure comprises 438 residues: UDP-N-acetylmuramoylalanine--D-glutamate ligase (438 aa).

An ATP-binding site is contributed by 112-118 (GSNGKST).

The protein belongs to the MurCDEF family.

The protein resides in the cytoplasm. It carries out the reaction UDP-N-acetyl-alpha-D-muramoyl-L-alanine + D-glutamate + ATP = UDP-N-acetyl-alpha-D-muramoyl-L-alanyl-D-glutamate + ADP + phosphate + H(+). Its pathway is cell wall biogenesis; peptidoglycan biosynthesis. Its function is as follows. Cell wall formation. Catalyzes the addition of glutamate to the nucleotide precursor UDP-N-acetylmuramoyl-L-alanine (UMA). In Salmonella typhimurium (strain LT2 / SGSC1412 / ATCC 700720), this protein is UDP-N-acetylmuramoylalanine--D-glutamate ligase.